The chain runs to 415 residues: Multifunctional CCA protein (415 aa).

Positions 8 and 11 each coordinate ATP. G8 and R11 together coordinate CTP. 2 residues coordinate Mg(2+): E21 and D23. Residues R91, R137, and R140 each contribute to the ATP site. CTP is bound by residues R91, R137, and R140. The region spanning 226–327 (TGIHTLMTVS…IKLFSAIDVW (102 aa)) is the HD domain.

This sequence belongs to the tRNA nucleotidyltransferase/poly(A) polymerase family. Bacterial CCA-adding enzyme type 1 subfamily. Monomer. Can also form homodimers and oligomers. Mg(2+) is required as a cofactor. Ni(2+) serves as cofactor.

The catalysed reaction is a tRNA precursor + 2 CTP + ATP = a tRNA with a 3' CCA end + 3 diphosphate. It carries out the reaction a tRNA with a 3' CCA end + 2 CTP + ATP = a tRNA with a 3' CCACCA end + 3 diphosphate. In terms of biological role, catalyzes the addition and repair of the essential 3'-terminal CCA sequence in tRNAs without using a nucleic acid template. Adds these three nucleotides in the order of C, C, and A to the tRNA nucleotide-73, using CTP and ATP as substrates and producing inorganic pyrophosphate. tRNA 3'-terminal CCA addition is required both for tRNA processing and repair. Also involved in tRNA surveillance by mediating tandem CCA addition to generate a CCACCA at the 3' terminus of unstable tRNAs. While stable tRNAs receive only 3'-terminal CCA, unstable tRNAs are marked with CCACCA and rapidly degraded. This chain is Multifunctional CCA protein, found in Sodalis glossinidius (strain morsitans).